We begin with the raw amino-acid sequence, 233 residues long: 28 kDa ribonucleoprotein, chloroplastic (233 aa).

The segment covering 1 to 16 has biased composition (polar residues); that stretch reads CVAQTSEWEQEGSTNA. Residues 1–52 form a disordered region; it reads CVAQTSEWEQEGSTNAVLEGESDPEGAVSWGSETQVSDEGGVEGGQGFSEPP. RRM domains are found at residues 55-133 and 149-227; these read AKLF…KAAP and CRVY…VAEE.

The protein localises to the plastid. It is found in the chloroplast. Probably involved in the 3'-end processing of chloroplast mRNA's. In Spinacia oleracea (Spinach), this protein is 28 kDa ribonucleoprotein, chloroplastic.